The sequence spans 434 residues: Trigger factor (434 aa).

Residues Gly-160–Pro-245 enclose the PPIase FKBP-type domain.

It belongs to the FKBP-type PPIase family. Tig subfamily.

Its subcellular location is the cytoplasm. It carries out the reaction [protein]-peptidylproline (omega=180) = [protein]-peptidylproline (omega=0). In terms of biological role, involved in protein export. Acts as a chaperone by maintaining the newly synthesized protein in an open conformation. Functions as a peptidyl-prolyl cis-trans isomerase. In Shewanella sp. (strain W3-18-1), this protein is Trigger factor.